The primary structure comprises 344 residues: Autophagy-related protein 14 (344 aa).

Residues 3–18 form a cysteine repeats region; it reads CPICHHRAHVVYCAHC. Positions 25–156 form a coiled coil; sequence LLLKLKLDLI…VSKICESARD (132 aa).

The protein belongs to the ATG14 family. As to quaternary structure, component of the autophagy-specific VPS34 PI3-kinase complex I composed of VPS15, VPS30, VPS34, ATG14 and ATG38. Interacts directly with ATG38.

The protein resides in the preautophagosomal structure membrane. It is found in the vacuole membrane. Its function is as follows. Required for cytoplasm to vacuole transport (Cvt) and autophagy as a part of the autophagy-specific VPS34 PI3-kinase complex I. This complex is essential to recruit the ATG8-phosphatidylinositol conjugate and the ATG12-ATG5 conjugate to the pre-autophagosomal structure. ATG14 mediates the specific binding of the VPS34 PI3-kinase complex I to the preautophagosomal structure (PAS). The sequence is that of Autophagy-related protein 14 (ATG14) from Saccharomyces cerevisiae (strain ATCC 204508 / S288c) (Baker's yeast).